The sequence spans 202 residues: Holliday junction branch migration complex subunit RuvA (202 aa).

Residues 1 to 65 (MIAYVEGRLA…EDALELYGFA (65 aa)) form a domain I region. The segment at 66-144 (TWDERQTFIV…VEDLPAAAPL (79 aa)) is domain II. Residues 145–155 (VTGGAPGGVFR) are flexible linker. Residues 155-202 (RDALAGLANLGYGEEEASHVLKDVLHGEPDLDVGGALRAALRALARGR) form a domain III region.

Belongs to the RuvA family. In terms of assembly, homotetramer. Forms an RuvA(8)-RuvB(12)-Holliday junction (HJ) complex. HJ DNA is sandwiched between 2 RuvA tetramers; dsDNA enters through RuvA and exits via RuvB. An RuvB hexamer assembles on each DNA strand where it exits the tetramer. Each RuvB hexamer is contacted by two RuvA subunits (via domain III) on 2 adjacent RuvB subunits; this complex drives branch migration. In the full resolvosome a probable DNA-RuvA(4)-RuvB(12)-RuvC(2) complex forms which resolves the HJ.

Its subcellular location is the cytoplasm. Functionally, the RuvA-RuvB-RuvC complex processes Holliday junction (HJ) DNA during genetic recombination and DNA repair, while the RuvA-RuvB complex plays an important role in the rescue of blocked DNA replication forks via replication fork reversal (RFR). RuvA specifically binds to HJ cruciform DNA, conferring on it an open structure. The RuvB hexamer acts as an ATP-dependent pump, pulling dsDNA into and through the RuvAB complex. HJ branch migration allows RuvC to scan DNA until it finds its consensus sequence, where it cleaves and resolves the cruciform DNA. The protein is Holliday junction branch migration complex subunit RuvA of Nitratidesulfovibrio vulgaris (strain ATCC 29579 / DSM 644 / CCUG 34227 / NCIMB 8303 / VKM B-1760 / Hildenborough) (Desulfovibrio vulgaris).